A 139-amino-acid polypeptide reads, in one-letter code: D-ribose pyranase (139 aa).

Catalysis depends on histidine 20, which acts as the Proton donor. Substrate contacts are provided by residues aspartate 28, histidine 106, and 128–130 (YAN).

Belongs to the RbsD / FucU family. RbsD subfamily. As to quaternary structure, homodecamer.

Its subcellular location is the cytoplasm. The catalysed reaction is beta-D-ribopyranose = beta-D-ribofuranose. It participates in carbohydrate metabolism; D-ribose degradation; D-ribose 5-phosphate from beta-D-ribopyranose: step 1/2. Catalyzes the interconversion of beta-pyran and beta-furan forms of D-ribose. This is D-ribose pyranase from Histophilus somni (strain 129Pt) (Haemophilus somnus).